The primary structure comprises 335 residues: MLP-like protein 28 (335 aa).

Belongs to the MLP family.

Can bind steroids (in vitro), and may also bind other types of hydrophobic ligands. The protein is MLP-like protein 28 (MLP28) of Arabidopsis thaliana (Mouse-ear cress).